A 202-amino-acid polypeptide reads, in one-letter code: Probable nicotinate-nucleotide adenylyltransferase (202 aa).

It belongs to the NadD family.

The enzyme catalyses nicotinate beta-D-ribonucleotide + ATP + H(+) = deamido-NAD(+) + diphosphate. It functions in the pathway cofactor biosynthesis; NAD(+) biosynthesis; deamido-NAD(+) from nicotinate D-ribonucleotide: step 1/1. Its function is as follows. Catalyzes the reversible adenylation of nicotinate mononucleotide (NaMN) to nicotinic acid adenine dinucleotide (NaAD). The chain is Probable nicotinate-nucleotide adenylyltransferase from Clostridium perfringens (strain 13 / Type A).